The sequence spans 393 residues: Squamosa promoter-binding-like protein 17 (393 aa).

Residues 40–49 are compositionally biased toward low complexity; sequence AAAVESSSTS. The disordered stretch occupies residues 40–67; sequence AAAVESSSTSSGGGGKKGKGVAAAAAPP. The SBP-type zinc-finger motif lies at 71 to 148; the sequence is PPRCQVEGCG…AGHNERRRKP (78 aa). Residues Cys-74, Cys-79, Cys-96, His-99, Cys-115, Cys-118, His-122, and Cys-134 each coordinate Zn(2+). The short motif at 131–147 is the Bipartite nuclear localization signal element; that stretch reads KKSCRRRLAGHNERRRK. Residues 137 to 148 show a composition bias toward basic residues; it reads RLAGHNERRRKP. Disordered regions lie at residues 137-158, 273-301, and 317-393; these read RLAG…SRYG, WDTT…GNNP, and GWNS…NWSL. Polar residues-rich tracts occupy residues 273-293 and 380-393; these read WDTT…STAS and GAFS…NWSL.

Expressed in young panicles.

It localises to the nucleus. Functionally, trans-acting factor that binds specifically to the consensus nucleotide sequence 5'-TNCGTACAA-3'. May be involved in panicle development. The polypeptide is Squamosa promoter-binding-like protein 17 (SPL17) (Oryza sativa subsp. japonica (Rice)).